We begin with the raw amino-acid sequence, 657 residues long: MQWRALVLGLVLLRLGLHGVLWLVFGLGPSMGFYQRFPLSFGFQRLRSPDGPASPTSGPVGRPGGVSGPSWLQPPGTGAAQSPRKAPRRPGPGMCGPANWGYVLGGRGRGPDEYEKRYSGAFPPQLRAQMRDLARGMFVFGYDNYMAHAFPQDELNPIHCRGRGPDRGDPSNLNINDVLGNYSLTLVDALDTLAIMGNSSEFQKAVKLVINTVSFDKDSTVQVFEATIRVLGSLLSAHRIITDSKQPFGDMTIKDYDNELLYMAHDLAVRLLPAFENTKTGIPYPRVNLKTGVPPDTNNETCTAGAGSLLVEFGILSRLLGDSTFEWVARRAVKALWNLRSNDTGLLGNVVNIQTGHWVGKQSGLGAGLDSFYEYLLKSYILFGEKEDLEMFNAAYQSIQNYLRRGREACNEGEGDPPLYVNVNMFSGQLMNTWIDSLQAFFPGLQVLIGDVEDAICLHAFYYAIWKRYGALPERYNWQLQAPDVLFYPLRPELVESTYLLYQATKNPFYLHVGMDILQSLEKYTKVKCGYATLHHVIDKSTEDRMESFFLSETCKYLYLLFDEDNPVHKSGTRYMFTTEGHIVSVDEHLRELPWKEFFSEEGGQDQGGKSVHRPKPHELKVINSSSNCNRVPDERRYSLPLKSIYMRQIDQMVGLI.

The Cytoplasmic segment spans residues 1 to 4; that stretch reads MQWR. The chain crosses the membrane as a helical; Signal-anchor for type II membrane protein span at residues 5 to 25; that stretch reads ALVLGLVLLRLGLHGVLWLVF. Residues 26-657 are Lumenal-facing; that stretch reads GLGPSMGFYQ…RQIDQMVGLI (632 aa). Residues 48-94 form a disordered region; that stretch reads SPDGPASPTSGPVGRPGGVSGPSWLQPPGTGAAQSPRKAPRRPGPGM. Asparagine 181, asparagine 198, asparagine 299, asparagine 342, and asparagine 624 each carry an N-linked (GlcNAc...) asparagine glycan.

Belongs to the glycosyl hydrolase 47 family. In terms of assembly, interacts with DNAJC10. Interacts with DERL2 and DERL3. Binds to SEL1L.

It localises to the endoplasmic reticulum membrane. Functionally, extracts misfolded glycoproteins, but not glycoproteins undergoing productive folding, from the calnexin cycle. It is directly involved in endoplasmic reticulum-associated degradation (ERAD) and targets misfolded glycoproteins for degradation in an N-glycan-independent manner, probably by forming a complex with SEL1L. It has low mannosidase activity, catalyzing mannose trimming from Man8GlcNAc2 to Man7GlcNAc2. The polypeptide is ER degradation-enhancing alpha-mannosidase-like protein 1 (EDEM1) (Homo sapiens (Human)).